Reading from the N-terminus, the 155-residue chain is S-ribosylhomocysteine lyase (155 aa).

The Fe cation site is built by His-58, His-62, and Cys-125.

It belongs to the LuxS family. In terms of assembly, homodimer. The cofactor is Fe cation.

The catalysed reaction is S-(5-deoxy-D-ribos-5-yl)-L-homocysteine = (S)-4,5-dihydroxypentane-2,3-dione + L-homocysteine. In terms of biological role, involved in the synthesis of autoinducer 2 (AI-2) which is secreted by bacteria and is used to communicate both the cell density and the metabolic potential of the environment. The regulation of gene expression in response to changes in cell density is called quorum sensing. Catalyzes the transformation of S-ribosylhomocysteine (RHC) to homocysteine (HC) and 4,5-dihydroxy-2,3-pentadione (DPD). This is S-ribosylhomocysteine lyase from Helicobacter pylori (strain HPAG1).